Here is a 407-residue protein sequence, read N- to C-terminus: Substance-P receptor (407 aa).

At 1–31 (MDNVLPVDSDLFPNISTNTSEPNQFVQPAWQ) the chain is on the extracellular side. N-linked (GlcNAc...) asparagine glycans are attached at residues Asn-14 and Asn-18. Residues 32 to 54 (IVLWAAAYTVIVVTSVVGNVVVM) form a helical membrane-spanning segment. The Cytoplasmic segment spans residues 55–64 (WIILAHKRMR). A helical transmembrane segment spans residues 65–86 (TVTNYFLVNLAFAEASMAAFNT). Topologically, residues 87-106 (VVNFTYAVHNEWYYGLFYCK) are extracellular. Cys-105 and Cys-180 are joined by a disulfide. A helical membrane pass occupies residues 107–128 (FHNFFPIAAVFASIYSMTAVAF). Residues 129 to 148 (DRYMAIIHPLQPRLSATATK) lie on the Cytoplasmic side of the membrane. Residues 149–169 (VVICVIWVLALLLAFPQGYYS) form a helical membrane-spanning segment. The Extracellular portion of the chain corresponds to 170–194 (TTETMPGRVVCMIEWPSHPDKIYEK). Residues 195-219 (VYHICVTVLIYFLPLLVIGYAYTVV) form a helical membrane-spanning segment. Residues 220 to 248 (GITLWASEIPGDSSDRYHEQVSAKRKVVK) are Cytoplasmic-facing. Residues 249–270 (MMIVVVCTFAICWLPFHIFFLL) traverse the membrane as a helical segment. Residues 271 to 283 (PYINPDLYLKKFI) are Extracellular-facing. The helical transmembrane segment at 284 to 308 (QQVYLAIMWLAMSSTMYNPIIYCCL) threads the bilayer. Residues 309–407 (NDRFRLGFKH…SSSFYSNMLS (99 aa)) lie on the Cytoplasmic side of the membrane. A lipid anchor (S-palmitoyl cysteine) is attached at Cys-322. The segment at 363 to 407 (GAHEEDPEEGPKATPSSLDLTSNGSSRSNSKTVTESSSFYSNMLS) is disordered. The span at 376–407 (TPSSLDLTSNGSSRSNSKTVTESSSFYSNMLS) shows a compositional bias: polar residues.

The protein belongs to the G-protein coupled receptor 1 family. Interacts with ARRB1.

The protein localises to the cell membrane. Its function is as follows. This is a receptor for the tachykinin neuropeptide substance P. It is probably associated with G proteins that activate a phosphatidylinositol-calcium second messenger system. The rank order of affinity of this receptor to tachykinins is: substance P &gt; substance K &gt; neuromedin-K. This is Substance-P receptor (TACR1) from Cavia porcellus (Guinea pig).